Reading from the N-terminus, the 254-residue chain is Short-chain dehydrogenase/reductase SDRA (254 aa).

Residue 15–39 (IVTASTQGIGFGITERFGLEGASVV) participates in NADP(+) binding. S146 lines the substrate pocket. Y159 (proton acceptor) is an active-site residue. Positions 252 to 254 (SRL) match the Microbody targeting signal motif.

The protein belongs to the short-chain dehydrogenases/reductases (SDR) family.

It is found in the peroxisome. Functionally, involved with IBR3 and IBR10 in the peroxisomal beta-oxidation of indole-3-butyric acid (IBA) to form indole-3-acetic acid (IAA), a biologically active auxin. May be responsible for catalyzing the dehydrogenation step in the conversion of IBA. May be involved in the peroxisomal activation of 2,4-dichlorophenoxybutyric acid (2,4-DB), a precursor of active auxins that inhibit root growth. The polypeptide is Short-chain dehydrogenase/reductase SDRA (Arabidopsis thaliana (Mouse-ear cress)).